A 62-amino-acid chain; its full sequence is Single-pass membrane and coiled-coil domain-containing protein 4 homolog (62 aa).

Residues 1–27 form a disordered region; sequence MRQLPGKAAKETRKMKRERKQQNKEGH. Residues 9 to 31 adopt a coiled-coil conformation; it reads AKETRKMKRERKQQNKEGHNRVV. A helical membrane pass occupies residues 30–50; sequence VVTVAIPVCLAVFVMLIVYVY.

Belongs to the SMCO4 family.

Its subcellular location is the membrane. The polypeptide is Single-pass membrane and coiled-coil domain-containing protein 4 homolog (Nematostella vectensis (Starlet sea anemone)).